The sequence spans 90 residues: uncharacterized protein (90 aa).

A coiled-coil region spans residues 36 to 82; the sequence is DQEYSDAQMQLEDAVNALNKLWLSSNDQQREQLYRMRLQLQSLQNNM.

This is an uncharacterized protein from Bacillus subtilis (strain 168).